The sequence spans 200 residues: Recombination protein RecR (200 aa).

The segment at 60 to 75 (CVYCQALTEDDVCNIC) adopts a C4-type zinc-finger fold. The Toprim domain maps to 83–177 (TKLCIIESML…KISRIGFGVP (95 aa)).

This sequence belongs to the RecR family.

Its function is as follows. May play a role in DNA repair. It seems to be involved in an RecBC-independent recombinational process of DNA repair. It may act with RecF and RecO. The chain is Recombination protein RecR from Francisella tularensis subsp. tularensis (strain SCHU S4 / Schu 4).